Reading from the N-terminus, the 793-residue chain is Translocase of chloroplast 90, chloroplastic (793 aa).

Positions Leu-22–Ser-59 are disordered. A compositionally biased stretch (basic and acidic residues) spans Phe-27–Asn-37. The stretch at Leu-130–Ser-157 forms a coiled coil. Residues Asp-164–Pro-394 enclose the AIG1-type G domain. The G1 stretch occupies residues Gly-173–Ser-180. GTP is bound by residues Gly-176–Ala-181 and Asp-195–Gly-200. Residue Ser-180 participates in Mg(2+) binding. A homodimerization region spans residues Asp-195 to Arg-198. The interval Pro-199–Arg-203 is G2. The G3 stretch occupies residues Asp-220–Gly-223. Residues Arg-259 to Asp-264 form a homodimerization region. A helical membrane pass occupies residues Ile-279 to Ala-297. Residues Thr-293–Ala-296 are G4. Residues His-294 and Glu-341 to Asn-342 each bind GTP. The tract at residues Glu-341–His-343 is G5. Coiled-coil stretches lie at residues Leu-410 to Leu-442 and Lys-477 to Gln-503.

This sequence belongs to the TRAFAC class TrmE-Era-EngA-EngB-Septin-like GTPase superfamily. AIG1/Toc34/Toc159-like paraseptin GTPase family. TOC159 subfamily. Homodimer. Part of the TOC core complex that includes 1 protein for the specific recognition of transit peptides surrounded by a ring composed of four proteins forming translocation channels, and four to five GTP-binding proteins providing energy. This core complex can interact with components of the TIC complex to form a larger import complex. Chloroplastic protein precursor such as prSS (precursor of the RuBisCO small subunit) interacts with these complexes. The TOC complex contains a specific subset of polar lipids such as digalactosyldiacylglyceride (DGDG), phosphatidylcholine (PC) and phosphatidylglycerol (PG). Interacts with TOC33 and TOC75. Mg(2+) serves as cofactor. In terms of tissue distribution, expressed in seedlings, leaves, flowers, and roots.

Its subcellular location is the plastid. It localises to the chloroplast outer membrane. The protein localises to the cytoplasm. GTPase involved in protein precursor import into chloroplasts. Seems to recognize chloroplast-destined precursor proteins and regulate their presentation to the translocation channel through GTP hydrolysis. Probably specialized in the import of nuclear encoded photosynthetic preproteins from the cytoplasm to the chloroplast. This chain is Translocase of chloroplast 90, chloroplastic (TOC90), found in Arabidopsis thaliana (Mouse-ear cress).